We begin with the raw amino-acid sequence, 311 residues long: MRLIFAGTPEPAVVVLSRLLESEHEVVAVLTRPDARRGRGRTLHPSPVSELAQQHGIEVLTPATIKPNTPDGDAFRARLTELAPDCVPVVAYGNLITEDLLQAVPHGWINLHFSLLPRWRGAAPVQAAIAAGDTSTGATTFRIDKGLDTGQILGVIHEPIQSTDTADDLLTRLAYSGADLLVNTMDNLAQGIATYSEQIGTATYAPKITTEDARIQWTHPAEAVDKHIRAVTPGPGAWSLLGDQRFKIGPVSVAEESDLQPGHMRIEKNRVLVGTGDLNIELDQIQPQGKKRMKASDWARGLQNTEGLVLS.

A (6S)-5,6,7,8-tetrahydrofolate-binding site is contributed by 114-117; it reads SLLP.

The protein belongs to the Fmt family.

The enzyme catalyses L-methionyl-tRNA(fMet) + (6R)-10-formyltetrahydrofolate = N-formyl-L-methionyl-tRNA(fMet) + (6S)-5,6,7,8-tetrahydrofolate + H(+). In terms of biological role, attaches a formyl group to the free amino group of methionyl-tRNA(fMet). The formyl group appears to play a dual role in the initiator identity of N-formylmethionyl-tRNA by promoting its recognition by IF2 and preventing the misappropriation of this tRNA by the elongation apparatus. The polypeptide is Methionyl-tRNA formyltransferase (Corynebacterium diphtheriae (strain ATCC 700971 / NCTC 13129 / Biotype gravis)).